A 278-amino-acid polypeptide reads, in one-letter code: Expansin-B17 (278 aa).

The first 26 residues, 1 to 26 (MAAASSRSFSLCVLLLLLLLAPPISA), serve as a signal peptide directing secretion. The region spanning 66-176 (GGACGYGSLV…RRTACKYGGK (111 aa)) is the Expansin-like EG45 domain. Intrachain disulfides connect Cys69/Cys98, Cys101/Cys171, and Cys106/Cys112. An Expansin-like CBD domain is found at 189-270 (FWLSLLVEFE…NWKPTATYTS (82 aa)).

The protein belongs to the expansin family. Expansin B subfamily.

The protein resides in the secreted. Its subcellular location is the cell wall. The protein localises to the membrane. In terms of biological role, may cause loosening and extension of plant cell walls by disrupting non-covalent bonding between cellulose microfibrils and matrix glucans. No enzymatic activity has been found. May be required for rapid internodal elongation in deepwater rice during submergence. The chain is Expansin-B17 (EXPB17) from Oryza sativa subsp. japonica (Rice).